The sequence spans 489 residues: MLTKLLKISCTSRQCTFAKPYQAIPGPRGPFGMGNLYNYLPGIGSYSWLRLHQAGQDKYEKYGAIVRETIVPGQDIVWLYDPKDIALLLNERDCPQRRSHLALAQYRKSRPDVYKTTGLLPTNGPEWWRIRAQVQKELSAPKSVRNFVRQVDGVTKEFIRFLQESRNGGAIDMLPKLTRLNLELTCLLTFGARLQSFTAQEQDPRSRSTRLMDAAETTNSCILPTDQGLQLWRFLETPSFRKLSQAQSYMESVALELVEENVRNGSVGSSLISAYVKNPELDRSDVVGTAADLLLAGIDTTSYASAFLLYHIARNPEVQQKLHEEARRVLPSAKDELSMDALRTDITYTRAVLKESLRLNPIAVGVGRILNQDAIFSGYFVPKGTTVVTQNMVACRLEQHFQDPLRFQPDRWLQHRSALNPYLVLPFGHGMRACIARRLAEQNMHILLLRLLREYELIWSGSDDEMGVKTLLINKPDAPVLIDLRLRRE.

Cysteine 434 lines the heme pocket.

The protein belongs to the cytochrome P450 family. Heme is required as a cofactor. As to expression, complex coexpression pattern of dib (disembodied) and sad (shade) in the early embryo that restricts to the prothoracic gland cells of the developing ring gland during late embryogenesis. In larvae and adult, coexpression is seen in prothoracic gland and follicle cells of the ovary. In adults, coexpression is seen in the follicle cells.

It localises to the mitochondrion membrane. It carries out the reaction 2,22-dideoxyecdysone + 2 reduced [adrenodoxin] + O2 + 2 H(+) = 2-deoxyecdysone + 2 oxidized [adrenodoxin] + H2O. The protein operates within steroid biosynthesis; ecdysteroid biosynthesis. In terms of biological role, required for CNS development; negatively regulates glial cell division in the embryonic midline. Involved in the metabolism of insect hormones; responsible for ecdysteroid C22-hydroxylase activity. May be involved in the breakdown of synthetic insecticides. The sequence is that of Cytochrome P450 302a1, mitochondrial from Drosophila melanogaster (Fruit fly).